The primary structure comprises 157 residues: MRCPYCSSEDSQVKDSRPAEDGNAIRRRRICPDCGGRFTTFERVQLRELMIIKKTGRKVPFDRDKLLRSFEIALRKRPVDRDRIERAVSGIVRRLESSGETEIPSEEIGLQVLEALKSLDDVAFVRYASVYRDFSHAEDFEKVIAEISAKIARDPSE.

The segment at 1–21 (MRCPYCSSEDSQVKDSRPAED) is disordered. The segment at 3 to 34 (CPYCSSEDSQVKDSRPAEDGNAIRRRRICPDC) is a zinc-finger region. Residues 11-21 (SQVKDSRPAED) are compositionally biased toward basic and acidic residues. The ATP-cone domain occupies 49–139 (LMIIKKTGRK…VYRDFSHAED (91 aa)).

The protein belongs to the NrdR family. Zn(2+) is required as a cofactor.

Its function is as follows. Negatively regulates transcription of bacterial ribonucleotide reductase nrd genes and operons by binding to NrdR-boxes. This is Transcriptional repressor NrdR from Sinorhizobium fredii (strain NBRC 101917 / NGR234).